Here is a 3948-residue protein sequence, read N- to C-terminus: Hybrid PKS-NRPS synthetase ucsA (3948 aa).

A Ketosynthase family 3 (KS3) domain is found at 11-440 (NEPIAVIGSG…GTNAHAILER (430 aa)). Catalysis depends on for beta-ketoacyl synthase activity residues Cys184, His323, and His363. Residues 548-881 (IFTGQGAQWP…FSTAIGQLWA (334 aa)) are malonyl-CoA:ACP transacylase (MAT) domain. The tract at residues 940-1079 (HPLLGTLGAD…GHIRLTITDF (140 aa)) is N-terminal hotdog fold. A dehydratase (DH) domain region spans residues 940-1254 (HPLLGTLGAD…IRLIPFAAAS (315 aa)). The 317-residue stretch at 940 to 1256 (HPLLGTLGAD…LIPFAAASEA (317 aa)) folds into the PKS/mFAS DH domain. The Proton acceptor; for dehydratase activity role is filled by His972. The interval 1098–1256 (MTEVDQNLFY…LIPFAAASEA (159 aa)) is C-terminal hotdog fold. Catalysis depends on Asp1161, which acts as the Proton donor; for dehydratase activity. The methyltransferase (MT) domain stretch occupies residues 1299 to 1460 (LAHVVGQITH…LRAGFTGVET (162 aa)). The segment at 1989–2165 (TYILFGLAGA…ASVIDIGPIS (177 aa)) is ketoreductase (KR) domain. The Carrier 1 domain maps to 2275 to 2357 (DVARVLRHAI…GLVDFAVDNL (83 aa)). Residue Ser2317 is modified to O-(pantetheine 4'-phosphoryl)serine. Low complexity predominate over residues 2381 to 2404 (PKAKTDAPAAAPTPASATAPGSKS). The interval 2381 to 2473 (PKAKTDAPAA…SSQAASLESS (93 aa)) is disordered. Polar residues-rich tracts occupy residues 2405 to 2418 (DGNVSSIARSADQS) and 2426 to 2437 (PQPTAILTNATA). Residues 2441–2456 (PVSPSLSVTGSTSSAA) are compositionally biased toward low complexity. Residues 2462-2473 (PTSSQAASLESS) show a composition bias toward polar residues. Residues 2489 to 2926 (EKTLPMSYGQ…PQIFNSSKVQ (438 aa)) are condensation (C) domain. The tract at residues 2950–3355 (DIAAVQPTLT…GEFVLQARIK (406 aa)) is adenylation (A) (KR) domain. The interval 3483 to 3507 (PLTNKGGLKETPVARPTRYQNDPIP) is disordered. The Carrier 2 domain occupies 3513-3592 (SSPFSSLDQV…QMASLLDGKD (80 aa)). Residue Ser3552 is modified to O-(pantetheine 4'-phosphoryl)serine. Positions 3633 to 3852 (LTGATGFLGL…QFVPVEDVAN (220 aa)) are reductase (R) domain.

In the C-terminal section; belongs to the NRP synthetase family.

The protein operates within mycotoxin biosynthesis. Hybrid PKS-NRPS synthetase; part of the gene cluster that mediates the biosynthesis of UCS1025A, a member of the pyrrolizidinone family that acts as a strong telomerase inhibitor and displays potent antibacterial and antitumor properties. These compounds share a hemiaminal-containing pyrrolizidinone core fused with a gamma-lactone, giving a furopyrrolizidine that is connected to a decalin fragment. The polyketide synthase module (PKS) of the PKS-NRPS ucsA is responsible for the synthesis of the polyketide backbone via the condensation of an acetyl-CoA starter unit with 6 malonyl-CoA units. The downstream nonribosomal peptide synthetase (NRPS) module then amidates the carboxyl end of the polyketide with a 2S,3S-methylproline derived from L-isoleucine by the 2-oxoglutarate-dependent dioxygenase ucsF which converts L-isoleucine to (4S,5S)-4-methylpyrroline-5-carboxylate that is further converted to 2S,3S-methylproline by the pyrroline-5-carboxylate reductase ucsG. Reductive release of the completed aminoacyl polyketide from the assembly line can form the 3-pyrrolin-2-one structure via an intramolecular Knoevenagel reaction. Because ucsA lacks a designated enoylreductase (ER) domain, the required activity is provided the enoyl reductase ucsL. This keto acyclic precursor is the substrate of the Diels-Alderase ucsH, that catalyzes the Diels-Alder cycloaddition. Oxidation of the 3S-methyl group to a carboxylate by the cytochrome P450 monooxygenase ucsK allows an oxa-Michael cyclization that might involve the reductase/dehydrogenase ucsI and which furnishes the furopyrrolizidine. The oxidase ucsJ likely plays a critical role in stereoselective reduction of the C5-C6 double bond to afford the required R-configured carboxylate group. Further enolization and oxidation at C5 by an unidentified enzyme affords the last intermediate that can undergo oxa-Michael cyclization to yield UCS1025A. In Acremonium sp, this protein is Hybrid PKS-NRPS synthetase ucsA.